Here is a 614-residue protein sequence, read N- to C-terminus: Phosphomethylpyrimidine synthase (614 aa).

Substrate is bound by residues Asn230, Met259, Tyr288, His324, 344 to 346, 385 to 388, and Glu424; these read SRG and DGLR. Residue His428 participates in Zn(2+) binding. Tyr451 contacts substrate. His492 contacts Zn(2+). [4Fe-4S] cluster-binding residues include Cys572, Cys575, and Cys580.

It belongs to the ThiC family. In terms of assembly, homodimer. Requires [4Fe-4S] cluster as cofactor.

The catalysed reaction is 5-amino-1-(5-phospho-beta-D-ribosyl)imidazole + S-adenosyl-L-methionine = 4-amino-2-methyl-5-(phosphooxymethyl)pyrimidine + CO + 5'-deoxyadenosine + formate + L-methionine + 3 H(+). It functions in the pathway cofactor biosynthesis; thiamine diphosphate biosynthesis. Its function is as follows. Catalyzes the synthesis of the hydroxymethylpyrimidine phosphate (HMP-P) moiety of thiamine from aminoimidazole ribotide (AIR) in a radical S-adenosyl-L-methionine (SAM)-dependent reaction. This chain is Phosphomethylpyrimidine synthase, found in Stenotrophomonas maltophilia (strain K279a).